A 436-amino-acid chain; its full sequence is 3-ketoacyl-CoA thiolase (436 aa).

C99 serves as the catalytic Acyl-thioester intermediate. Catalysis depends on proton acceptor residues H392 and C422.

It belongs to the thiolase-like superfamily. Thiolase family. In terms of assembly, heterotetramer of two alpha chains (FadJ) and two beta chains (FadI).

It is found in the cytoplasm. The catalysed reaction is an acyl-CoA + acetyl-CoA = a 3-oxoacyl-CoA + CoA. It participates in lipid metabolism; fatty acid beta-oxidation. Its function is as follows. Catalyzes the final step of fatty acid oxidation in which acetyl-CoA is released and the CoA ester of a fatty acid two carbons shorter is formed. The protein is 3-ketoacyl-CoA thiolase of Salmonella choleraesuis (strain SC-B67).